A 378-amino-acid polypeptide reads, in one-letter code: uncharacterized protein (378 aa).

The segment covering 1–11 (MSPMNRQRKNK) has biased composition (basic residues). The interval 1-23 (MSPMNRQRKNKSNVLNEKDERPG) is disordered.

This is an uncharacterized protein from Caenorhabditis elegans.